Here is a 336-residue protein sequence, read N- to C-terminus: Large ribosomal subunit protein uL10 (336 aa).

Residues Ala-305–Phe-336 form a disordered region. Over residues Glu-311–Ala-326 the composition is skewed to basic and acidic residues.

This sequence belongs to the universal ribosomal protein uL10 family. In terms of assembly, part of the 50S ribosomal subunit. Forms part of the ribosomal stalk which helps the ribosome interact with GTP-bound translation factors. Forms a heptameric L10(L12)2(L12)2(L12)2 complex, where L10 forms an elongated spine to which the L12 dimers bind in a sequential fashion.

Forms part of the ribosomal stalk, playing a central role in the interaction of the ribosome with GTP-bound translation factors. This chain is Large ribosomal subunit protein uL10, found in Methanococcus vannielii (strain ATCC 35089 / DSM 1224 / JCM 13029 / OCM 148 / SB).